A 1097-amino-acid chain; its full sequence is Transmembrane protein 132D (1097 aa).

The first 30 residues, 1 to 30 (MCPSEMGTLWYLWSPVLISLAALFSKVTEG), serve as a signal peptide directing secretion. Residues 31–913 (RGILESIQRF…LDQAAKGLSD (883 aa)) lie on the Extracellular side of the membrane. Positions 233-245 (DERGDCAKEDSRK) are enriched in basic and acidic residues. Residues 233 to 263 (DERGDCAKEDSRKSGGTPAGHNDVDESSPPL) form a disordered region. Residues 914 to 934 (LEIGMYALLGVFCLAILVFLI) traverse the membrane as a helical segment. Residues 935–1097 (NCVTFALKYR…SCMERLHEHV (163 aa)) lie on the Cytoplasmic side of the membrane. The disordered stretch occupies residues 1021–1042 (MLTDDQEQKSEPPTSPTSKRKR).

Belongs to the TMEM132 family. In terms of tissue distribution, expressed in mature oligodendrocytes in the white and gray matter of the brain.

The protein localises to the membrane. Functionally, regulates neuronal morphology via inhibition of the WAVE regulatory complex (WCR), a complex that controls F-actin cytoskeletal dynamics. The sequence is that of Transmembrane protein 132D (Tmem132d) from Mus musculus (Mouse).